The following is a 529-amino-acid chain: UDP-glucuronosyltransferase 2B18 (529 aa).

The signal sequence occupies residues 1–21 (MSVKWTSVILLIQLSFYFSSG). Residues Asn67 and Asn68 are each glycosylated (N-linked (GlcNAc...) asparagine). A helical transmembrane segment spans residues 493–513 (VIGFLLACVATVIFIIMKCCL).

The protein belongs to the UDP-glycosyltransferase family. In terms of tissue distribution, expressed in liver, prostate, kidney, testis, adrenal, bile duct, bladder, colon, small intestine, cerebellum and pancreas.

It localises to the microsome membrane. Its subcellular location is the endoplasmic reticulum membrane. It catalyses the reaction glucuronate acceptor + UDP-alpha-D-glucuronate = acceptor beta-D-glucuronoside + UDP + H(+). Its function is as follows. UDPGT is of major importance in the conjugation and subsequent elimination of potentially toxic xenobiotics and endogenous compounds. This isozyme displays activity toward 3-hydroxyandrogens. It is principally active on C19 steroids having a hydroxyl group at position 3-alpha of the steroid molecule and also active on planar phenols and bile acids. The chain is UDP-glucuronosyltransferase 2B18 (UGT2B18) from Macaca fascicularis (Crab-eating macaque).